A 264-amino-acid chain; its full sequence is Thiazole synthase (264 aa).

Catalysis depends on K106, which acts as the Schiff-base intermediate with DXP. 1-deoxy-D-xylulose 5-phosphate-binding positions include G167, 193-194, and 215-216; these read AG and NT.

Belongs to the ThiG family. As to quaternary structure, homotetramer. Forms heterodimers with either ThiH or ThiS.

Its subcellular location is the cytoplasm. The enzyme catalyses [ThiS sulfur-carrier protein]-C-terminal-Gly-aminoethanethioate + 2-iminoacetate + 1-deoxy-D-xylulose 5-phosphate = [ThiS sulfur-carrier protein]-C-terminal Gly-Gly + 2-[(2R,5Z)-2-carboxy-4-methylthiazol-5(2H)-ylidene]ethyl phosphate + 2 H2O + H(+). The protein operates within cofactor biosynthesis; thiamine diphosphate biosynthesis. Its function is as follows. Catalyzes the rearrangement of 1-deoxy-D-xylulose 5-phosphate (DXP) to produce the thiazole phosphate moiety of thiamine. Sulfur is provided by the thiocarboxylate moiety of the carrier protein ThiS. In vitro, sulfur can be provided by H(2)S. The chain is Thiazole synthase from Xanthomonas oryzae pv. oryzae (strain MAFF 311018).